Here is a 1183-residue protein sequence, read N- to C-terminus: Protein deacetylase HDAC6 (1183 aa).

A disordered region spans residues 1-61; it reads MTSTGQDSST…KGKMKKLSQP (61 aa). Positions 18–29 are enriched in polar residues; the sequence is NPQSPLQDSSAT. Position 21 is a phosphoserine (Ser21). Residue Arg32 is modified to Omega-N-methylarginine. The Nuclear export signal signature appears at 66-75; it reads LIVGLQGLDL. 2 histone deacetylase regions span residues 86-434 and 512-830; these read GLVF…TLLG and GLVY…SLLG. Residue His215 is the 1 of the active site. Residue His641 is the 2 of the active site. Positions 972-1042 are disordered; it reads ATENSANQTT…EAQEVQESEE (71 aa). Over residues 980–996 the composition is skewed to low complexity; sequence TTSGEEASGETESFGTS. Phosphothreonine occurs at positions 990, 995, and 1005. The segment covering 997-1008 has biased composition (polar residues); that stretch reads PSSNASKQTTGA. Residue Ser1009 is modified to Phosphoserine. A compositionally biased stretch (low complexity) spans 1021 to 1035; sequence ELGLSSTLELSSEAQ. The UBP-type zinc-finger motif lies at 1079-1177; sequence SWCPHLMAVC…NAAHQNKFGE (99 aa). Zn(2+)-binding residues include Cys1081, His1083, Cys1101, Cys1104, Cys1113, Cys1116, and Cys1121. The segment at 1122–1124 is ubiquitin binding; that stretch reads SRY. Residues His1128, His1132, His1138, Cys1151, and Cys1154 each coordinate Zn(2+). A ubiquitin binding region spans residues 1150-1157; sequence WCYLCQAY.

This sequence belongs to the histone deacetylase family. HD type 2 subfamily. As to quaternary structure, forms a trimeric complex in the nucleus consisting of BANP, HDAC6 and KHDRBS1/SAM68; HDAC6 keeps KHDRBS1 in a deacetylated state which inhibits the inclusion of CD44 alternate exons. The complex is disrupted by MAPK1/MAPK3-mediated phosphorylation of BANP which results in BANP export to the cytoplasm. This facilitates acetylation of KHDRBS1 and CD44 variant exon inclusion. Interacts with SIRT2 (via both phosphorylated, unphosphorylated, active or inactive forms); the interaction is necessary for the complex to interact with alpha-tubulin. Under proteasome impairment conditions, interacts with UBD via its histone deacetylase 1 and UBP-type zinc-finger regions. Interacts with BBIP1, CBFA2T3, CYLD, DDIT3/CHOP, ZMYND15, F-actin and HDAC11. Interacts with RIPOR2; this interaction occurs during early myogenic differentiation and prevents HDAC6 to deacetylate tubulin. Interacts with AURKA; AURKA-mediated phosphorylation of HDAC6 promotes deacetylation of alpha-tubulin. Interacts with DYSF; this interaction occurs during early myogenic differentiation. Interacts with TPPP; inhibiting the tubulin deacetylase activity of HDAC6. Interacts with DYNLL1. Interacts with ATP13A2; the interaction results in recruitment of HDAC6 to lysosomes to promote CTTN deacetylation. Interacts with CCDC141 (via the N-terminal region); inhibiting the deacetylase activity of HDAC6. Interacts with IPO7; the interaction facilitates HDAC6 nuclear translocation in dental papilla cells. Zn(2+) serves as cofactor. In terms of processing, phosphorylated by AURKA; phosphorylation increases HDAC6-mediated deacetylation of alpha-tubulin and subsequent disassembly of cilia. Ubiquitinated. Its polyubiquitination however does not lead to its degradation. Post-translationally, sumoylated in vitro.

Its subcellular location is the cytoplasm. The protein resides in the cytoskeleton. The protein localises to the nucleus. It is found in the perikaryon. It localises to the cell projection. Its subcellular location is the dendrite. The protein resides in the axon. The protein localises to the cilium. It is found in the microtubule organizing center. It localises to the centrosome. Its subcellular location is the cilium basal body. It carries out the reaction N(6)-acetyl-L-lysyl-[protein] + H2O = L-lysyl-[protein] + acetate. The enzyme catalyses N(6)-acetyl-L-lysyl-[alpha-tubulin] + H2O = L-lysyl-[alpha-tubulin] + acetate. It functions in the pathway protein modification; protein ubiquitination. Its function is as follows. Deacetylates a wide range of non-histone substrates. Plays a central role in microtubule-dependent cell motility by mediating deacetylation of tubulin. Required for cilia disassembly via deacetylation of alpha-tubulin. Alpha-tubulin deacetylation results in destabilization of dynamic microtubules. Promotes deacetylation of CTTN, leading to actin polymerization, promotion of autophagosome-lysosome fusion and completion of autophagy. Deacetylates SQSTM1. Deacetylates peroxiredoxins PRDX1 and PRDX2, decreasing their reducing activity. Deacetylates antiviral protein RIGI in the presence of viral mRNAs which is required for viral RNA detection by RIGI. Sequentially deacetylates and polyubiquitinates DNA mismatch repair protein MSH2 which leads to MSH2 degradation, reducing cellular sensitivity to DNA-damaging agents and decreasing cellular DNA mismatch repair activities. Deacetylates DNA mismatch repair protein MLH1 which prevents recruitment of the MutL alpha complex (formed by the MLH1-PMS2 heterodimer) to the MutS alpha complex (formed by the MSH2-MSH6 heterodimer), leading to tolerance of DNA damage. Deacetylates RHOT1/MIRO1 which blocks mitochondrial transport and mediates axon growth inhibition. Deacetylates transcription factor SP1 which leads to increased expression of ENG, positively regulating angiogenesis. Deacetylates KHDRBS1/SAM68 which regulates alternative splicing by inhibiting the inclusion of CD44 alternate exons. Promotes odontoblast differentiation following IPO7-mediated nuclear import and subsequent repression of RUNX2 expression. In addition to its protein deacetylase activity, plays a key role in the degradation of misfolded proteins: when misfolded proteins are too abundant to be degraded by the chaperone refolding system and the ubiquitin-proteasome, mediates the transport of misfolded proteins to a cytoplasmic juxtanuclear structure called aggresome. Probably acts as an adapter that recognizes polyubiquitinated misfolded proteins and targets them to the aggresome, facilitating their clearance by autophagy. This Rattus norvegicus (Rat) protein is Protein deacetylase HDAC6.